The following is a 522-amino-acid chain: DEP domain-containing protein 7 (522 aa).

The DEP domain occupies Leu46–Asn138.

It belongs to the DEPDC7 family.

This chain is DEP domain-containing protein 7 (depdc7), found in Xenopus laevis (African clawed frog).